Reading from the N-terminus, the 2878-residue chain is Trinucleotide repeat-containing gene 18 protein (2878 aa).

2 disordered regions span residues 1–54 (MDGR…KYMA) and 102–194 (TQKD…SSRL). A compositionally biased stretch (polar residues) spans 119–128 (TPSSRTPSGH). 3 stretches are compositionally biased toward basic and acidic residues: residues 137–149 (SSRE…RAGR), 158–169 (GKKDPRAREEVS), and 179–194 (QEAR…SSRL). Ser-199 carries the phosphoserine modification. 12 disordered regions span residues 259 to 289 (ARPC…AGVY), 313 to 442 (FDER…KWKP), 487 to 507 (MPRA…AAHG), 540 to 655 (SPFG…DDEC), 865 to 1002 (AQEH…ALFT), 1033 to 1104 (ADGL…LESP), 1127 to 1146 (LEAQ…SEVS), 1171 to 1228 (LGTQ…DCDL), 1429 to 1535 (ELVK…DSSS), 1613 to 1668 (LGLS…DEDE), 1694 to 1718 (VPKN…RTLK), and 1737 to 1787 (EARS…GEQA). Residues 264–283 (SPLPPPPPLPPKGPPAPPSS) show a composition bias toward pro residues. Composition is skewed to basic and acidic residues over residues 327–337 (RDVRAREREPG) and 350–362 (RLER…EKSS). Positions 376–390 (PPAARSSRSSPDARA) are enriched in low complexity. The span at 396–411 (ELLKPEADPRPCERAP) shows a compositional bias: basic and acidic residues. Position 540 is a phosphoserine (Ser-540). Lys-549 is covalently cross-linked (Glycyl lysine isopeptide (Lys-Gly) (interchain with G-Cter in SUMO2)). Composition is skewed to basic and acidic residues over residues 580–589 (LKRDPERPES) and 865–881 (AQEH…KRSL). Residues 958–969 (SSPPPASPPPTP) show a composition bias toward pro residues. Over residues 972-993 (TRKEEAPENVVEKKDLELEKET) the composition is skewed to basic and acidic residues. Phosphoserine occurs at positions 1053 and 1062. Over residues 1068 to 1088 (EPPRDSPEEEQLADREVKAEV) the composition is skewed to basic and acidic residues. The stretch at 1410-1442 (LDFRMRLAEVQRRYKEKQRELVKLQRRRDSGDR) forms a coiled coil. A compositionally biased stretch (basic and acidic residues) spans 1429 to 1448 (ELVKLQRRRDSGDRHEDAHR). Over residues 1449 to 1463 (SLARRGPGRPRKRTH) the composition is skewed to basic residues. Ser-1469 is modified (phosphoserine). The segment covering 1478-1492 (SSSGKGLSSKSLLTS) has biased composition (low complexity). Positions 1745 to 1775 (SSEEDSFDQDDSSEEEEEELEEEEEDEEEEG) are enriched in acidic residues. Ser-1789 and Ser-1795 each carry phosphoserine. Residues 1825 to 1835 (EQKARKKEERQ) show a composition bias toward basic and acidic residues. Disordered regions lie at residues 1825–2040 (EQKA…GAVS), 2052–2080 (FEAN…TPAP), and 2226–2681 (LLVP…RLPS). A compositionally biased stretch (low complexity) spans 1876–1890 (AAPGPGSRASGPSSP). Basic and acidic residues-rich tracts occupy residues 1891–1900 (DKAKLVSEKG), 1925–1936 (LWTRRRSERIFL), 1966–1978 (PRKD…DRKD), and 2024–2034 (RGKEAKKENRG). Residue Thr-2077 is modified to Phosphothreonine. Basic and acidic residues predominate over residues 2238–2247 (TSKDTGEVKE). A compositionally biased stretch (basic residues) spans 2261 to 2270 (ARGRGRKPST). 2 stretches are compositionally biased toward basic and acidic residues: residues 2307–2316 (STPEPVDKRA) and 2409–2419 (AKEALLLREDP). 3 stretches are compositionally biased toward low complexity: residues 2460–2470 (EPGPGLPLEDP), 2491–2520 (TTSS…SGSE), and 2540–2578 (RTCS…SSST). Acidic residues predominate over residues 2579-2591 (TDEDSSCSSDEEA). Residues 2631-2641 (TQPPPQPPPQP) show a composition bias toward pro residues. The residue at position 2681 (Ser-2681) is a Phosphoserine. Residues 2727–2872 (EMIRIGDCAV…PTTGMIFSTD (146 aa)) form the BAH domain.

In Mus musculus (Mouse), this protein is Trinucleotide repeat-containing gene 18 protein (Tnrc18).